Consider the following 183-residue polypeptide: Akirin-1B (183 aa).

Positions 14–43 are disordered; that stretch reads EALMSPQSPKRRRCAPLPGSPATPSPQRCG. Residues 180-183 carry the SYVS motif motif; sequence SYVS.

This sequence belongs to the akirin family.

It localises to the nucleus. Its function is as follows. Molecular adapter that acts as a bridge between proteins, and which is involved skeletal muscle development. Functions as a signal transducer for MSTN during skeletal muscle regeneration and myogenesis. This is Akirin-1B (akirin1-b) from Xenopus laevis (African clawed frog).